Reading from the N-terminus, the 145-residue chain is Large ribosomal subunit protein bL9 (145 aa).

This sequence belongs to the bacterial ribosomal protein bL9 family.

Functionally, binds to the 23S rRNA. The sequence is that of Large ribosomal subunit protein bL9 from Ureaplasma parvum serovar 3 (strain ATCC 700970).